Here is a 318-residue protein sequence, read N- to C-terminus: Cytochrome c biogenesis protein CcsA (318 aa).

A run of 8 helical transmembrane segments spans residues 17–37 (VLALGLAAFALLLLAIPISFW), 45–65 (SAVVTLLVALANLVLTAQLVL), 75–95 (ISNLYESLCFLAWACTLAQLL), 104–124 (IVSAAATPMALLCVAFASFAL), 149–169 (VIMCSYAALLVGSFLSMAVLF), 224–244 (TITVGFLLLTLGLISGAVWAN), 258–275 (TWALICWMVYAAYLHTRF), and 287–307 (VAVAGIVVIVVCYIGVNLLGI).

The protein belongs to the CcmF/CycK/Ccl1/NrfE/CcsA family. May interact with ccs1.

The protein resides in the cellular thylakoid membrane. In terms of biological role, required during biogenesis of c-type cytochromes (cytochrome c6 and cytochrome f) at the step of heme attachment. The sequence is that of Cytochrome c biogenesis protein CcsA from Prochlorococcus marinus (strain MIT 9303).